We begin with the raw amino-acid sequence, 97 residues long: UPF0235 protein HAPS_1504 (97 aa).

The protein belongs to the UPF0235 family.

This is UPF0235 protein HAPS_1504 from Glaesserella parasuis serovar 5 (strain SH0165) (Haemophilus parasuis).